We begin with the raw amino-acid sequence, 172 residues long: Monopolar attachment protein 1 (172 aa).

Over residues 15–30 (KKNKNPKISNSKKKNS) the composition is skewed to basic residues. The interval 15 to 43 (KKNKNPKISNSKKKNSTRPALQDKTNQTL) is disordered. The span at 31–43 (TRPALQDKTNQTL) shows a compositional bias: polar residues. Positions 100–102 (STP) match the POLO box domain (PBD)-binding motif.

In terms of assembly, interacts with rec8, Interacts with plo1.

Its subcellular location is the nucleus. It is found in the chromosome. The protein localises to the centromere. The protein resides in the kinetochore. Its function is as follows. Plays an important role in chromosome segregation during meiosis I by allowing meiotic rec8 to establish cohesion at the centromeric central core and thereby promote the side-by-side structure of kinetochores at meiosis I. Enables monopolar attachment during meiosis I. Required to facilitate kinetochore mono-orientation during meiosis I, when kinetochores on sister chromosomes face the same direction and are thus captured and pulled by spindle fibers from the same pole. Acts in collaboration with plo1. This chain is Monopolar attachment protein 1 (moa1), found in Schizosaccharomyces pombe (strain 972 / ATCC 24843) (Fission yeast).